Here is a 153-residue protein sequence, read N- to C-terminus: uncharacterized protein (153 aa).

Disordered regions lie at residues 30-66 and 79-153; these read GPTV…RKGD and IKEN…DYDD. A compositionally biased stretch (acidic residues) spans 45 to 56; it reads EDSDGSDKEDEQ. Composition is skewed to polar residues over residues 106-116 and 130-144; these read GDTTSGVNACS and GTKS…SSLL.

This is an uncharacterized protein from Xenopus laevis (African clawed frog).